We begin with the raw amino-acid sequence, 105 residues long: Replication initiation control protein YabA (105 aa).

Residues H79, C81, C95, and C98 each coordinate Zn(2+).

Belongs to the YabA family. In terms of assembly, homotetramer. Interacts with both DnaA and DnaN, acting as a bridge between these two proteins. The cofactor is Zn(2+).

It is found in the cytoplasm. The protein resides in the nucleoid. Its function is as follows. Involved in control of chromosome replication initiation. Inhibits the cooperative binding of DnaA to the oriC region, thus negatively regulating initiation of chromosome replication. Inhibits the ability of DnaA-ATP to form a helix on DNA; does not disassemble preformed DnaA-DNA helices. Decreases the residence time of DnaA on the chromosome at its binding sites (oriC, replication forks and promoter-binding sites). Tethers DnaA to the replication machinery via the DNA polymerase beta sliding clamp subunit (dnaN). Associates with oriC and other DnaA targets on the chromosome in a DnaA-dependent manner. In Streptococcus sanguinis (strain SK36), this protein is Replication initiation control protein YabA.